Consider the following 188-residue polypeptide: Protein-export protein SecB (188 aa).

2 disordered regions span residues 1-21 and 160-188; these read MADE…EQPK and RQKA…DTQQ. The span at 176-188 shows a compositional bias: polar residues; it reads SDSTAAQGSDTQQ.

It belongs to the SecB family. Homotetramer, a dimer of dimers. One homotetramer interacts with 1 SecA dimer.

It localises to the cytoplasm. Functionally, one of the proteins required for the normal export of preproteins out of the cell cytoplasm. It is a molecular chaperone that binds to a subset of precursor proteins, maintaining them in a translocation-competent state. It also specifically binds to its receptor SecA. The protein is Protein-export protein SecB of Alkalilimnicola ehrlichii (strain ATCC BAA-1101 / DSM 17681 / MLHE-1).